We begin with the raw amino-acid sequence, 342 residues long: RNA 3'-terminal phosphate cyclase (342 aa).

ATP is bound by residues glutamine 102 and 283–287 (HLADQ). Histidine 308 acts as the Tele-AMP-histidine intermediate in catalysis.

This sequence belongs to the RNA 3'-terminal cyclase family. Type 1 subfamily.

The protein resides in the cytoplasm. The catalysed reaction is a 3'-end 3'-phospho-ribonucleotide-RNA + ATP = a 3'-end 2',3'-cyclophospho-ribonucleotide-RNA + AMP + diphosphate. Functionally, catalyzes the conversion of 3'-phosphate to a 2',3'-cyclic phosphodiester at the end of RNA. The mechanism of action of the enzyme occurs in 3 steps: (A) adenylation of the enzyme by ATP; (B) transfer of adenylate to an RNA-N3'P to produce RNA-N3'PP5'A; (C) and attack of the adjacent 2'-hydroxyl on the 3'-phosphorus in the diester linkage to produce the cyclic end product. The biological role of this enzyme is unknown but it is likely to function in some aspects of cellular RNA processing. This is RNA 3'-terminal phosphate cyclase from Pseudomonas fluorescens (strain ATCC BAA-477 / NRRL B-23932 / Pf-5).